The following is a 508-amino-acid chain: GMP synthase [glutamine-hydrolyzing] (508 aa).

The region spanning 1–189 (MILVLDFGSQ…ALLVCDCEKT (189 aa)) is the Glutamine amidotransferase type-1 domain. Cys78 acts as the Nucleophile in catalysis. Active-site residues include His163 and Glu165. A GMPS ATP-PPase domain is found at 190–383 (WGMQHFAQRE…LGISQDFLMR (194 aa)). 217-223 (SGGVDST) lines the ATP pocket.

As to quaternary structure, homodimer.

The catalysed reaction is XMP + L-glutamine + ATP + H2O = GMP + L-glutamate + AMP + diphosphate + 2 H(+). It participates in purine metabolism; GMP biosynthesis; GMP from XMP (L-Gln route): step 1/1. In terms of biological role, catalyzes the synthesis of GMP from XMP. This chain is GMP synthase [glutamine-hydrolyzing], found in Helicobacter pylori (strain HPAG1).